The following is a 208-amino-acid chain: Putative archaetidylserine decarboxylase proenzyme (208 aa).

Ser-172 serves as the catalytic Schiff-base intermediate with substrate; via pyruvic acid. Position 172 is a pyruvic acid (Ser); by autocatalysis (Ser-172).

It belongs to the phosphatidylserine decarboxylase family. PSD-A subfamily. As to quaternary structure, heterodimer of a large membrane-associated beta subunit and a small pyruvoyl-containing alpha subunit. It depends on pyruvate as a cofactor. Is synthesized initially as an inactive proenzyme. Formation of the active enzyme involves a self-maturation process in which the active site pyruvoyl group is generated from an internal serine residue via an autocatalytic post-translational modification. Two non-identical subunits are generated from the proenzyme in this reaction, and the pyruvate is formed at the N-terminus of the alpha chain, which is derived from the carboxyl end of the proenzyme. The post-translation cleavage follows an unusual pathway, termed non-hydrolytic serinolysis, in which the side chain hydroxyl group of the serine supplies its oxygen atom to form the C-terminus of the beta chain, while the remainder of the serine residue undergoes an oxidative deamination to produce ammonia and the pyruvoyl prosthetic group on the alpha chain.

The protein localises to the cell membrane. It carries out the reaction archaetidylserine + H(+) = archaetidylethanolamine + CO2. Catalyzes the formation of archaetidylethanolamine (PtdEtn) from archaetidylserine (PtdSer). The sequence is that of Putative archaetidylserine decarboxylase proenzyme from Methanosarcina acetivorans (strain ATCC 35395 / DSM 2834 / JCM 12185 / C2A).